The sequence spans 614 residues: V-type proton ATPase catalytic subunit A isoform 1 (614 aa).

Residue 247-254 participates in ATP binding; sequence GAFGCGKT.

The protein belongs to the ATPase alpha/beta chains family. As to quaternary structure, V-ATPase is a heteromultimeric enzyme made up of two complexes: the ATP-hydrolytic V1 complex and the proton translocation V0 complex. The V1 complex consists of three catalytic AB heterodimers that form a heterohexamer, three peripheral stalks each consisting of EG heterodimers, one central rotor including subunits D and F, and the regulatory subunits C and H. The proton translocation complex V0 consists of the proton transport subunit a, a ring of proteolipid subunits c9c'', rotary subunit d, subunits e and f, and the accessory subunits VhaAC45 and ATP6AP2.

The catalysed reaction is ATP + H2O + 4 H(+)(in) = ADP + phosphate + 5 H(+)(out). Its activity is regulated as follows. ATP hydrolysis occurs at the interface between the nucleotide-binding domains of subunits A and B. ATP hydrolysis triggers a conformational change in the subunits D and F, which induces a shift of subunit d. The c-ring is subsequently rotated and results in a continuous proton translocation across the membrane. In terms of biological role, catalytic subunit of the V1 complex of vacuolar(H+)-ATPase (V-ATPase), a multisubunit enzyme composed of a peripheral complex (V1) that hydrolyzes ATP and a membrane integral complex (V0) that translocates protons. V-ATPase is responsible for acidifying and maintaining the pH of intracellular compartments and in some cell types, is targeted to the plasma membrane, where it is responsible for acidifying the extracellular environment. The protein is V-type proton ATPase catalytic subunit A isoform 1 (Vha68-1) of Drosophila melanogaster (Fruit fly).